The sequence spans 531 residues: Unconventional prefoldin RPB5 interactor (531 aa).

Met1 bears the N-acetylmethionine mark. Disordered stretches follow at residues 1–24 (MEPP…APLR), 224–381 (ELES…ELPA), 408–470 (KSRS…SGVS), and 500–531 (TIPE…QQRS). A compositionally biased stretch (low complexity) spans 13 to 24 (PLAEASAAAPLR). Polar residues-rich tracts occupy residues 257-266 (SPVTDSSAAS) and 280-296 (GQVN…NSYH). Over residues 300-319 (DDDEEEEDDDDDDDEDDDNE) the composition is skewed to acidic residues. Ser369 bears the Phosphoserine; by RPS6KB1 mark. Residues 414–424 (NSVCSDTSESS) are compositionally biased toward polar residues. Ser439 carries the phosphoserine modification.

The protein belongs to the RNA polymerase II subunit 5-mediating protein family. As to quaternary structure, homodimer. Component of the PAQosome complex which is responsible for the biogenesis of several protein complexes and which consists of R2TP complex members RUVBL1, RUVBL2, RPAP3 and PIH1D1, URI complex members PFDN2, PFDN6, PDRG1, UXT and URI1 as well as ASDURF, POLR2E and DNAAF10/WDR92. Interacts with POLR2E/RPB5, RUVBL2 and RUVBL1. Interacts with PFDN2, PFDN4 and STAP1; the interactions are phosphorylation-dependent and occur in a growth-dependent manner in the mitochondrion. Interacts with UXT. Interacts with PPP1CC; the interaction is phosphorylation-dependent and occurs in a growth factor-dependent manner. Interacts (via the middle C-terminal region) with GTF2F1 and GTF2F2. Interacts with DMAP1. Interacts with TSC1 and TSC2. Interacts with PRPF8 and EFTUD2 in a ZNHIT2-dependent manner. Phosphorylation occurs in response to androgen treatment in prostate cancer cells in a mTOR-dependent manner. Phosphorylated; hyperhosphorylated in mitochondria in a mTORC-dependent signaling pathway. Phosphorylated at Ser-369 by RPS6KB1 in a growth factor- and rapamycin-dependent manner. S6K1-mediated mitochondrial phosphorylation at Ser-369 disrupts the URI1-PPP1CC complex in the mitochondrion, relieves PPP1CC phosphatase inhibition activity and hence engages a negative feedback diminishing RPS6KB1 kinase activity, preventing sustained S6K1-dependent signaling. Phosphorylated. Phosphorylation occurs essentially on serine residues. In terms of tissue distribution, expressed in the spinal cord, ganglia, choroid plexus and olfactors epithelium of the developing brain. Expressed in skin, lung, kidney, testis and muscles (at protein level). Expressed strongly in brain and kidney. Expressed weakly in skeletal muscle, lung and liver.

Its subcellular location is the nucleus. The protein resides in the cytoplasm. The protein localises to the mitochondrion. It is found in the cell projection. It localises to the dendrite. Its function is as follows. Involved in gene transcription regulation. Acts as a transcriptional repressor in concert with the corepressor UXT to regulate androgen receptor (AR) transcription. May act as a tumor suppressor to repress AR-mediated gene transcription and to inhibit anchorage-independent growth in prostate cancer cells. Required for cell survival in ovarian cancer cells. Together with UXT, associates with chromatin to the NKX3-1 promoter region. Plays a central role in maintaining S6K1 signaling and BAD phosphorylation under normal growth conditions thereby protecting cells from potential deleterious effects of sustained S6K1 signaling. The URI1-PPP1CC complex acts as a central component of a negative feedback mechanism that counteracts excessive S6K1 survival signaling to BAD in response to growth factors. Mediates inhibition of PPP1CC phosphatase activity in mitochondria. Coordinates the regulation of nutrient-sensitive gene expression availability in a mTOR-dependent manner. Seems to be a scaffolding protein able to assemble a prefoldin-like complex that contains PFDs and proteins with roles in transcription and ubiquitination. The polypeptide is Unconventional prefoldin RPB5 interactor (Uri1) (Mus musculus (Mouse)).